A 358-amino-acid chain; its full sequence is Homoserine O-acetyltransferase (358 aa).

Positions 41 to 343 (NAVLICHALT…DYGHDAFLVD (303 aa)) constitute an AB hydrolase-1 domain. Ser143 (nucleophile) is an active-site residue. Position 212 (Arg212) interacts with substrate. Catalysis depends on residues Asp304 and His337. Asp338 is a binding site for substrate.

It belongs to the AB hydrolase superfamily. MetX family. As to quaternary structure, homodimer.

The protein resides in the cytoplasm. It catalyses the reaction L-homoserine + acetyl-CoA = O-acetyl-L-homoserine + CoA. It functions in the pathway amino-acid biosynthesis; L-methionine biosynthesis via de novo pathway; O-acetyl-L-homoserine from L-homoserine: step 1/1. Its function is as follows. Transfers an acetyl group from acetyl-CoA to L-homoserine, forming acetyl-L-homoserine. In Haemophilus influenzae (strain 86-028NP), this protein is Homoserine O-acetyltransferase.